The primary structure comprises 83 residues: Small ribosomal subunit protein bS16 (83 aa).

This sequence belongs to the bacterial ribosomal protein bS16 family.

In Pseudoalteromonas atlantica (strain T6c / ATCC BAA-1087), this protein is Small ribosomal subunit protein bS16.